A 506-amino-acid chain; its full sequence is Maturase K (506 aa).

This sequence belongs to the intron maturase 2 family. MatK subfamily.

The protein resides in the plastid. Its subcellular location is the chloroplast. Its function is as follows. Usually encoded in the trnK tRNA gene intron. Probably assists in splicing its own and other chloroplast group II introns. The sequence is that of Maturase K from Melilotus albus (White sweet clover).